The chain runs to 381 residues: Meiotic recombination protein SPO11-1 (381 aa).

The Topo IIA-type catalytic domain occupies 23–162; the sequence is EEAATLLHRI…LNVVPVAKGL (140 aa). Tyr123 serves as the catalytic O-(5'-phospho-DNA)-tyrosine intermediate. 2 residues coordinate Mg(2+): Glu209 and Asp261.

The protein belongs to the TOP6A family. The cofactor is Mg(2+). Highly expressed in flowers before pollination. Expressed in roots and shoots.

It localises to the nucleus. The catalysed reaction is ATP-dependent breakage, passage and rejoining of double-stranded DNA.. Required for meiotic recombination. Mediates DNA cleavage that forms the double-strand breaks (DSB) that initiate meiotic recombination. May be involved in plant growth and development, and stress tolerance. This chain is Meiotic recombination protein SPO11-1 (SPO11-1), found in Oryza sativa subsp. indica (Rice).